The primary structure comprises 1157 residues: ATP-dependent helicase/deoxyribonuclease subunit B (1157 aa).

Positions 1–277 constitute a UvrD-like helicase ATP-binding domain; sequence MTLQIIAGKA…KILLENKRAN (277 aa). 8-15 is an ATP binding site; that stretch reads GKAGTGKT. One can recognise a UvrD-like helicase C-terminal domain in the interval 271–590; that stretch reads LENKRANSDS…VLADMENAKL (320 aa). [4Fe-4S] cluster-binding residues include cysteine 794, cysteine 1115, cysteine 1118, and cysteine 1124.

Belongs to the helicase family. AddB/RexB type 1 subfamily. Heterodimer of AddA and AddB. Requires Mg(2+) as cofactor. It depends on [4Fe-4S] cluster as a cofactor.

Functionally, the heterodimer acts as both an ATP-dependent DNA helicase and an ATP-dependent, dual-direction single-stranded exonuclease. Recognizes the chi site generating a DNA molecule suitable for the initiation of homologous recombination. The AddB subunit has 5' -&gt; 3' nuclease activity but not helicase activity. The protein is ATP-dependent helicase/deoxyribonuclease subunit B of Listeria innocua serovar 6a (strain ATCC BAA-680 / CLIP 11262).